The sequence spans 168 residues: Transcription antitermination protein NusB (168 aa).

This sequence belongs to the NusB family.

Involved in transcription antitermination. Required for transcription of ribosomal RNA (rRNA) genes. Binds specifically to the boxA antiterminator sequence of the ribosomal RNA (rrn) operons. This is Transcription antitermination protein NusB from Chlamydia trachomatis serovar L2 (strain ATCC VR-902B / DSM 19102 / 434/Bu).